A 270-amino-acid polypeptide reads, in one-letter code: NAD kinase (270 aa).

The active-site Proton acceptor is the D45. NAD(+)-binding positions include 45-46, 121-122, R147, D149, 160-165, and A184; these read DG, NE, and TAYNKS.

This sequence belongs to the NAD kinase family. Requires a divalent metal cation as cofactor.

It is found in the cytoplasm. It carries out the reaction NAD(+) + ATP = ADP + NADP(+) + H(+). In terms of biological role, involved in the regulation of the intracellular balance of NAD and NADP, and is a key enzyme in the biosynthesis of NADP. Catalyzes specifically the phosphorylation on 2'-hydroxyl of the adenosine moiety of NAD to yield NADP. The sequence is that of NAD kinase from Limosilactobacillus reuteri subsp. reuteri (strain JCM 1112) (Lactobacillus reuteri).